The chain runs to 547 residues: MPRSLDNFQNEDSSHPNEQGAWADSGSGFPNPNSNDVSNSQRNHHRHMFPLARIRSELSEQDSSISFTHDPLHIPLPNPSNNNDNIFHPQVHSSFHSRSASRQRRRSGLSRSNATRYSRRSLSDWLETIRENNYDEASIPSFFSPHTERLVGRVLRLNRYLQNSELLDRNSSTFGSNPNSVFSAQPTEPSVEPPTSSFPIQPPLPPSRSISISNPQSLSFPSSFDQSNYNFQAASTPQFNPLIEHLRRSNSPLNPSHDSAGASTFNTYFPNSTYQNILNSLDNNPAVLDLNGPPNQESSSSASSYGSRTQTPNARSCSLNIVFHKHKKVCTYYMIRHYAKRRLFITPTWWLRSGSVFRGLQFGGVQSISGLPPLTNPKERWIVDVSIHVVDYKRRALEGQLNAQARSSDPSSTISTAWTGEILDFSEKLNFATEKWSAPLEIDVCYWRKLAPFQNMDTNTFLETITNPKKLYKICQKYIFMRWKDMLILKDQTDTSESRITGFYFCCLCRENGYIQGYYYDPKHAFCSQPLNLFPEQPSLSPSYHFV.

Polar residues-rich tracts occupy residues 1–11 (MPRSLDNFQNE) and 28–41 (GFPN…SNSQ). Disordered regions lie at residues 1–42 (MPRS…NSQR), 60–115 (EQDS…SNAT), 169–217 (RNSS…NPQS), and 285–313 (PAVL…QTPN). A compositionally biased stretch (basic residues) spans 99 to 108 (SASRQRRRSG). Polar residues predominate over residues 169-185 (RNSSTFGSNPNSVFSAQ). 3 stretches are compositionally biased toward low complexity: residues 186–199 (PTEP…SSFP), 207–217 (SRSISISNPQS), and 298–307 (SSSSASSYGS).

The protein belongs to the GID4/VID24 family. In terms of assembly, substrate-recognition component of the GID/CTLH complex. In the absence of stress, the complex exists as an inactive anticipatory complex (GID(Ant)), composed of Gid1, the E3 ubiquitin-ligase Gid2, Gid5, Gid8, and the RING-like subunit Gid9, awaiting a substrate receptor to form the active E3 ligase complex. When cells are shifted to glucose-containing medium, the substrate receptor Gid4 is induced and becomes part of the complex, named GID(SR4). Additionally, Gid7 transforms the GID(SR4) E3 ligase core into a higher-order supramolecular assembly (Chelator-GID(SR4)). Under osmotic or heat stress, the substrate receptor Gid10 is induced and becomes part of the complex, named GID(SR10). Interacts with proteins that have an N-terminal Pro/N-degron.

It is found in the nucleus. In terms of biological role, substrate-recognition component of the GID E3 ligase complex recruiting N termini and catalyzing ubiquitination of proteins targeted for degradation. GID E3 is regulated through assembly with interchangeable N-degron-binding substrate receptors induced by distinct environmental perturbations. Required for the adaptation to osmotic or heat stress. Specific for substrates with an N-terminal Pro (Pro/N-degron). This is GID complex substrate-recognition subunit 10 (gid10) from Schizosaccharomyces pombe (strain 972 / ATCC 24843) (Fission yeast).